The primary structure comprises 105 residues: Nucleoid-associated protein cu1912 (105 aa).

The protein belongs to the YbaB/EbfC family. As to quaternary structure, homodimer.

The protein resides in the cytoplasm. It localises to the nucleoid. Functionally, binds to DNA and alters its conformation. May be involved in regulation of gene expression, nucleoid organization and DNA protection. This chain is Nucleoid-associated protein cu1912, found in Corynebacterium urealyticum (strain ATCC 43042 / DSM 7109).